The following is a 94-amino-acid chain: MSRSAWKPPFCHPSVLRLVNRALKQGSINKVIKIHSRASVILPNCLGLKFAVYNGKDYIPVSVNDQNMIGHKFGEFSPTRKFAGHNGDKKAVRR.

This sequence belongs to the universal ribosomal protein uS19 family.

Its function is as follows. Protein S19 forms a complex with S13 that binds strongly to the 16S ribosomal RNA. In Wolbachia sp. subsp. Brugia malayi (strain TRS), this protein is Small ribosomal subunit protein uS19.